Here is a 141-residue protein sequence, read N- to C-terminus: Nucleoside diphosphate kinase (141 aa).

Lysine 11, phenylalanine 59, arginine 87, threonine 93, arginine 104, and asparagine 114 together coordinate ATP. Histidine 117 acts as the Pros-phosphohistidine intermediate in catalysis.

This sequence belongs to the NDK family. In terms of assembly, homotetramer. Mg(2+) is required as a cofactor.

Its subcellular location is the cytoplasm. It carries out the reaction a 2'-deoxyribonucleoside 5'-diphosphate + ATP = a 2'-deoxyribonucleoside 5'-triphosphate + ADP. The catalysed reaction is a ribonucleoside 5'-diphosphate + ATP = a ribonucleoside 5'-triphosphate + ADP. Its function is as follows. Major role in the synthesis of nucleoside triphosphates other than ATP. The ATP gamma phosphate is transferred to the NDP beta phosphate via a ping-pong mechanism, using a phosphorylated active-site intermediate. In Bordetella avium (strain 197N), this protein is Nucleoside diphosphate kinase.